Here is a 207-residue protein sequence, read N- to C-terminus: LexA repressor (207 aa).

The H-T-H motif DNA-binding region spans 28-48; the sequence is RAEIARELGFRSANAAEEHLK. Catalysis depends on for autocatalytic cleavage activity residues Ser124 and Lys161.

The protein belongs to the peptidase S24 family. As to quaternary structure, homodimer.

The enzyme catalyses Hydrolysis of Ala-|-Gly bond in repressor LexA.. Functionally, represses a number of genes involved in the response to DNA damage (SOS response), including recA and lexA. In the presence of single-stranded DNA, RecA interacts with LexA causing an autocatalytic cleavage which disrupts the DNA-binding part of LexA, leading to derepression of the SOS regulon and eventually DNA repair. This is LexA repressor from Aliivibrio salmonicida (strain LFI1238) (Vibrio salmonicida (strain LFI1238)).